We begin with the raw amino-acid sequence, 900 residues long: Phospholipase DDHD1 (900 aa).

3 disordered regions span residues 1-28 (MNYP…ELGS), 100-152 (LRYY…GGPA), and 202-233 (GARP…DEDR). Serine 8 and serine 11 each carry phosphoserine. Over residues 130–140 (SGGGGATGGSP) the composition is skewed to gly residues. Serine 537 is a catalytic residue. The 276-residue stretch at 611-886 (LKFKVENFFC…ALFLLTFMYK (276 aa)) folds into the DDHD domain. 2 disordered regions span residues 706-725 (AKEP…PSPV) and 768-801 (SSTT…TQTL). Polar residues predominate over residues 710–725 (TSVSENEGISTIPSPV). Serine 723 carries the post-translational modification Phosphoserine. The segment covering 776-787 (TSKDSMEDEKKP) has biased composition (basic and acidic residues). A compositionally biased stretch (polar residues) spans 791–801 (PSATTVGTQTL).

Belongs to the PA-PLA1 family. In terms of assembly, forms homooligomers and, to a much smaller extent, heterooligomers with DDHD2. As to expression, highly expressed in testis. Also expressed in brain, spleen and lung. Only expressed in cerebellum in fetal brain.

Its subcellular location is the cytoplasm. It carries out the reaction a 1,2-diacyl-sn-glycero-3-phosphate + H2O = a 2-acyl-sn-glycerol 3-phosphate + a fatty acid + H(+). The catalysed reaction is a 1,2-diacyl-sn-glycero-3-phospho-(1D-myo-inositol) + H2O = a 2-acyl-sn-glycero-3-phospho-D-myo-inositol + a fatty acid + H(+). It catalyses the reaction 1-octadecanoyl-2-(5Z,8Z,11Z,14Z-eicosatetraenoyl)-sn-glycero-3-phospho-(1D-myo-inositol) + H2O = 2-(5Z,8Z,11Z,14Z-eicosatetraenoyl)-sn-glycero-3-phospho-(1D-myo-inositol) + octadecanoate + H(+). The enzyme catalyses a 1-acyl-2-(5Z,8Z,11Z,14Z-eicosatetraenoyl)-sn-glycero-3-phospho-(1D-myo-inositol) + H2O = 2-(5Z,8Z,11Z,14Z-eicosatetraenoyl)-sn-glycero-3-phospho-(1D-myo-inositol) + a fatty acid + H(+). It carries out the reaction 1,2-dihexadecanoyl-sn-glycero-3-phospho-(1D-myo-inositol) + H2O = 2-hexadecanoyl-sn-glycero-3-phospho-(1D-myo-inositol) + hexadecanoate + H(+). The catalysed reaction is a 1-acyl-2-(5Z,8Z,11Z,14Z)-eicosatetraenoyl-sn-glycero-3-phosphate + H2O = 2-(5Z,8Z,11Z,14Z-eicosatetraenoyl)-sn-glycero-3-phosphate + a fatty acid + H(+). It catalyses the reaction 1,2-di-(9Z-octadecenoyl)-sn-glycero-3-phosphate + H2O = 2-(9Z-octadecenoyl)-sn-glycero-3-phosphate + (9Z)-octadecenoate + H(+). The enzyme catalyses 1-hexadecanoyl-2-(9Z-octadecenoyl)-sn-glycero-3-phosphate + H2O = 2-(9Z-octadecenoyl)-sn-glycero-3-phosphate + hexadecanoate + H(+). It carries out the reaction 1-hexadecanoyl-2-(9Z-octadecenoyl)-sn-glycero-3-phospho-L-serine + H2O = 2-(9Z-octadecenoyl)-sn-glycero-3-phospho-L-serine + hexadecanoate + H(+). The catalysed reaction is 1,2-di-(5Z,8Z,11Z,14Z)-eicosatetraenoyl-sn-glycero-3-phosphate + H2O = 2-(5Z,8Z,11Z,14Z-eicosatetraenoyl)-sn-glycero-3-phosphate + (5Z,8Z,11Z,14Z)-eicosatetraenoate + H(+). It catalyses the reaction 1-octadecanoyl-2-(5Z,8Z,11Z,14Z-eicosatetraenoyl)-sn-glycero-3-phosphate + H2O = 2-(5Z,8Z,11Z,14Z-eicosatetraenoyl)-sn-glycero-3-phosphate + octadecanoate + H(+). The enzyme catalyses a 1,2-diacyl-sn-glycero-3-phosphocholine + H2O = a 2-acyl-sn-glycero-3-phosphocholine + a fatty acid + H(+). It carries out the reaction a 1,2-diacyl-sn-glycero-3-phosphoethanolamine + H2O = a 2-acyl-sn-glycero-3-phosphoethanolamine + a fatty acid + H(+). The catalysed reaction is a 1,2-diacyl-sn-glycero-3-phospho-L-serine + H2O = a 2-acyl-sn-glycero-3-phospho-L-serine + a fatty acid + H(+). It catalyses the reaction a 1,2-diacyl-sn-glycero-3-phospho-(1'-sn-glycerol) + H2O = 2-acyl-sn-glycero-3-phospho-(1'-sn-glycerol) + a fatty acid + H(+). The enzyme catalyses 1-hexadecanoyl-2-(9Z-octadecenoyl)-sn-glycero-3-phospho-(1'-sn-glycerol) + H2O = 2-(9Z-octadecenoyl)-sn-glycero-3-phospho-(1'-sn-glycerol) + hexadecanoate + H(+). It carries out the reaction 1-acyl-2-(5Z,8Z,11Z,14Z-eicosatetraenoyl)-sn-glycero-3-phosphocholine + H2O = 2-(5Z,8Z,11Z,14Z)-eicosatetraenoyl-sn-glycero-3-phosphocholine + a fatty acid + H(+). The catalysed reaction is 1-acyl-2-(5Z,8Z,11Z,14Z)-eicosatetraenoyl-sn-glycero-3-phosphoethanolamine + H2O = 2-(5Z,8Z,11Z,14Z)-eicosatetraenoyl-sn-glycero-3-phosphoethanolamine + a fatty acid + H(+). It catalyses the reaction 1-(9Z-octadecenoyl)-2-(7Z,10Z,13Z,16Z,19Z-docosapentaenoyl)-sn-glycero-3-phospho-1D-myo-inositol + H2O = 2-(7Z,10Z,13Z,16Z,19Z-docosapentaenoyl)-sn-glycero-3-phospho-1D-myo-inositol + (9Z)-octadecenoate + H(+). The enzyme catalyses 1-(9Z-octadecenoyl)-2-(5Z,8Z,11Z,14Z-eicosatetraenoyl)-sn-glycero-3-phospho-1D-myo-inositol + H2O = 2-(5Z,8Z,11Z,14Z-eicosatetraenoyl)-sn-glycero-3-phospho-(1D-myo-inositol) + (9Z)-octadecenoate + H(+). It carries out the reaction 1,2-di-(9Z-octadecenoyl)-sn-glycero-3-phospho-1D-myo-inositol + H2O = 2-(9Z-octadecenoyl)-sn-glycero-3-phospho-1D-myo-inositol + (9Z)-octadecenoate + H(+). The catalysed reaction is 1-(9Z-octadecenoyl)-2-(8Z,11Z,14Z-eicosatrienoyl)-sn-glycero-3-phospho-1D-myo-inositol + H2O = 2-(8Z,11Z,14Z-eicosatrienoyl)-sn-glycero-3-phospho-1D-myo-inositol + (9Z)-octadecenoate + H(+). It catalyses the reaction 1,2-di-(9Z-octadecenoyl)-sn-glycero-3-phosphocholine + H2O = (9Z-octadecenoyl)-sn-glycero-3-phosphocholine + (9Z)-octadecenoate + H(+). It participates in phospholipid metabolism; phosphatidylinositol metabolism. With respect to regulation, phosphatidate (1,2-diacyl-sn-glycero-3-phosphate, PA) can positively regulate phospholipase A1 activity. In terms of biological role, phospholipase A1 (PLA1) that hydrolyzes ester bonds at the sn-1 position of glycerophospholipids producing a free fatty acid and a lysophospholipid. Prefers phosphatidate (1,2-diacyl-sn-glycero-3-phosphate, PA) as substrate in vitro, but can efficiently hydrolyze phosphatidylinositol (1,2-diacyl-sn-glycero-3-phospho-(1D-myo-inositol), PI), as well as a range of other glycerophospholipid substrates such as phosphatidylcholine (1,2-diacyl-sn-glycero-3-phosphocholine, PC), phosphatidylethanolamine (1,2-diacyl-sn-glycero-3-phosphoethanolamine, PE), phosphatidylserine (1,2-diacyl-sn-glycero-3-phospho-L-serine, PS) and phosphatidylglycerol (1,2-diacyl-sn-glycero-3-phospho-(1'-sn-glycerol), PG). Involved in the regulation of the endogenous content of polyunsaturated PI and PS lipids in the nervous system. Changes in these lipids extend to downstream metabolic products like PI phosphates PIP and PIP2, which play fundamental roles in cell biology. Regulates mitochondrial morphology. These dynamic changes may be due to PA hydrolysis at the mitochondrial surface. May play a regulatory role in spermatogenesis or sperm function. The chain is Phospholipase DDHD1 from Homo sapiens (Human).